Here is a 910-residue protein sequence, read N- to C-terminus: Leucine--tRNA ligase (910 aa).

Positions proline 42 to histidine 52 match the 'HIGH' region motif. The short motif at threonine 658–serine 662 is the 'KMSKS' region element. Lysine 661 provides a ligand contact to ATP.

It belongs to the class-I aminoacyl-tRNA synthetase family.

It localises to the cytoplasm. The catalysed reaction is tRNA(Leu) + L-leucine + ATP = L-leucyl-tRNA(Leu) + AMP + diphosphate. The polypeptide is Leucine--tRNA ligase (Acidovorax sp. (strain JS42)).